A 314-amino-acid polypeptide reads, in one-letter code: Target of rapamycin complex subunit wat1 (314 aa).

WD repeat units lie at residues 1-35 (MSVQYPPQHSVLLVSSGYDHTIRFWEALSGICSRT), 38-76 (HADSQVNRLCISPDKKFLAAAGNPHVRLYDINTSSQMPL), 81-120 (GHTNNVTAIAFHCDGKWLATSSEDGTVKVWDMRAPSVQRN), 122-161 (DHKSPVNDLLIHPNQGELLSCDQSGRVRAWDLGENSCTHE), 165-204 (EEDVPMSSITVGSDGSMLIAGNNKGNCYVWRMLNHQGASL), 213-252 (AHQRYITRCVLSPDVKHLATCSADATVNIWSTEDMSFMLE), and 257-296 (GHQRWVWDCAFSADSTYLVTASSDHVARLWELSSGETIRQ). The residue at position 141 (S141) is a Phosphoserine.

This sequence belongs to the WD repeat LST8 family. As to quaternary structure, the target of rapamycin complex 1 (TORC1) is composed of at least mip1, pop3/wat1, tco89, toc1 and tor2. The target of rapamycin complex 2 (TORC2) is composed of at least bit61, pop3/wat1, sin1, ste20 and tor1. Interacts with prp2.

Its subcellular location is the cytoplasm. It is found in the nucleus. Component of both TORC1 and TORC2, which regulate multiple cellular processes to control cell growth in response to environmental signals. Nutrient limitation and environmental stress signals cause inactivation of TORC1. Active TORC1 positively controls cell growth and ribosome biogenesis by regulating ribosomal protein gene expression. TORC1 negatively controls G1 cell-cycle arrest, sexual development and amino acid uptake. Represses mating, meiosis and sporulation efficiency by interfering with the functions of the transcription factor ste11 and the meiosis-promoting RNA-binding protein mei2. TORC2 is required for cell survival under various stress conditions. TORC2 positively controls G1 cell-cycle arrest, sexual development and amino acid uptake. Positively regulates amino acid uptake through the control of expression of amino acid permeases. May play a role in mRNA maturation as a coupling protein between splicing and synthesis and/or stabilization. The protein is Target of rapamycin complex subunit wat1 of Schizosaccharomyces pombe (strain 972 / ATCC 24843) (Fission yeast).